A 278-amino-acid polypeptide reads, in one-letter code: Phosphatidylglycerol--prolipoprotein diacylglyceryl transferase (278 aa).

A run of 4 helical transmembrane segments spans residues 17-37, 57-77, 89-109, and 119-139; these read LAVRWYGLMYLLGFSLFILLG, ALFYGVLGVILGGRLGHVLFY, ILAIWQGGMSFHGGFLGVAIA, and LSWLAVTDFIAPLVPLGLGAG. Arg-140 provides a ligand contact to a 1,2-diacyl-sn-glycero-3-phospho-(1'-sn-glycerol). Transmembrane regions (helical) follow at residues 174-194, 200-220, and 233-253; these read QLYEFALEGLVLFALIWLYSA, GAVTGMFMIGYGAFRSFCEFF, and LGISMGQWLSLPMIAAGIALL.

The protein belongs to the Lgt family.

The protein resides in the cell inner membrane. It catalyses the reaction L-cysteinyl-[prolipoprotein] + a 1,2-diacyl-sn-glycero-3-phospho-(1'-sn-glycerol) = an S-1,2-diacyl-sn-glyceryl-L-cysteinyl-[prolipoprotein] + sn-glycerol 1-phosphate + H(+). It functions in the pathway protein modification; lipoprotein biosynthesis (diacylglyceryl transfer). Its function is as follows. Catalyzes the transfer of the diacylglyceryl group from phosphatidylglycerol to the sulfhydryl group of the N-terminal cysteine of a prolipoprotein, the first step in the formation of mature lipoproteins. In Nitrosomonas europaea (strain ATCC 19718 / CIP 103999 / KCTC 2705 / NBRC 14298), this protein is Phosphatidylglycerol--prolipoprotein diacylglyceryl transferase.